Here is a 263-residue protein sequence, read N- to C-terminus: Fructose-bisphosphate aldolase class 1 (263 aa).

Substrate-binding positions include 24–25, histidine 29, aspartate 33, and tryptophan 144; that span reads DH. Tyrosine 146 acts as the Proton donor in catalysis. Residues arginine 148, 177–179, 202–204, and 231–232 each bind substrate; these read KIK, SGG, and GR. Catalysis depends on lysine 177, which acts as the Schiff-base intermediate with dihydroxyacetone-P.

This sequence belongs to the DeoC/FbaB aldolase family. As to quaternary structure, homodecamer (dimer of pentamers).

Its subcellular location is the cytoplasm. The enzyme catalyses beta-D-fructose 1,6-bisphosphate = D-glyceraldehyde 3-phosphate + dihydroxyacetone phosphate. With respect to regulation, activated by citrate. Functionally, catalyzes the reversible cleavage of fructose 1,6-bisphosphate (FBP) to glyceraldehyde 3-phosphate (GAP) and dihydroxyacetone phosphate (DHAP). This Thermoproteus tenax (strain ATCC 35583 / DSM 2078 / JCM 9277 / NBRC 100435 / Kra 1) protein is Fructose-bisphosphate aldolase class 1 (fba).